The primary structure comprises 600 residues: Glutamine--fructose-6-phosphate aminotransferase [isomerizing] (600 aa).

The active-site Nucleophile; for GATase activity is the cysteine 2. One can recognise a Glutamine amidotransferase type-2 domain in the interval 2 to 217; sequence CGIVGYIGTE…DEEIVIVTKD (216 aa). SIS domains are found at residues 283–422 and 452–590; these read IRQA…AKGI and IARD…VDKP. Lysine 595 (for Fru-6P isomerization activity) is an active-site residue.

Homodimer.

It is found in the cytoplasm. The enzyme catalyses D-fructose 6-phosphate + L-glutamine = D-glucosamine 6-phosphate + L-glutamate. Catalyzes the first step in hexosamine metabolism, converting fructose-6P into glucosamine-6P using glutamine as a nitrogen source. The sequence is that of Glutamine--fructose-6-phosphate aminotransferase [isomerizing] from Halalkalibacterium halodurans (strain ATCC BAA-125 / DSM 18197 / FERM 7344 / JCM 9153 / C-125) (Bacillus halodurans).